Reading from the N-terminus, the 337-residue chain is Probable phospholipase A1 magnifin (337 aa).

An N-terminal signal peptide occupies residues 1–21; sequence MNLKYLLLFFCLVQVLHYCYS. Residues 22–33 constitute a propeptide that is removed on maturation; sequence HGDPSLSNELDR. The cysteines at positions 39 and 123 are disulfide-linked. Ser173 acts as the Nucleophile in catalysis. The Charge relay system role is filled by Asp201. Intrachain disulfides connect Cys212/Cys217 and Cys255/Cys264. Catalysis depends on His266, which acts as the Charge relay system. Intrachain disulfides connect Cys281–Cys305, Cys282–Cys330, and Cys298–Cys303.

This sequence belongs to the AB hydrolase superfamily. Lipase family. As to expression, expressed by the venom gland.

It localises to the secreted. It catalyses the reaction a 1,2-diacyl-sn-glycero-3-phosphocholine + H2O = a 2-acyl-sn-glycero-3-phosphocholine + a fatty acid + H(+). Catalyzes the hydrolysis of phosphatidylcholine with phospholipase A1 activity. May act as an allergen and induce hemolytic activity. In vivo, induces dose-dependent platelet aggregation (nanomolar concentration) and induces thrombosis. This Vespa magnifica (Hornet) protein is Probable phospholipase A1 magnifin.